Consider the following 273-residue polypeptide: 5-deoxy-glucuronate isomerase (273 aa).

It belongs to the isomerase IolB family.

The catalysed reaction is 5-deoxy-D-glucuronate = 5-dehydro-2-deoxy-D-gluconate. Its pathway is polyol metabolism; myo-inositol degradation into acetyl-CoA; acetyl-CoA from myo-inositol: step 4/7. Involved in the isomerization of 5-deoxy-glucuronate (5DG) to 5-dehydro-2-deoxy-D-gluconate (DKG or 2-deoxy-5-keto-D-gluconate). This Listeria monocytogenes serotype 4b (strain CLIP80459) protein is 5-deoxy-glucuronate isomerase.